The following is a 213-amino-acid chain: Probable 26S proteasome regulatory subunit p27 (213 aa).

Residues 1 to 82 (MDEFKQLDLK…IKKVLEKVFS (82 aa)) adopt a coiled-coil conformation. The region spanning 120–184 (SKILGRVKPF…TLDVLLIRGY (65 aa)) is the PDZ domain.

It is found in the cytoplasm. The protein localises to the nucleus. Acts as a chaperone during the assembly of the 26S proteasome, specifically of the base subcomplex of the 19S regulatory complex (RC). In Schizosaccharomyces pombe (strain 972 / ATCC 24843) (Fission yeast), this protein is Probable 26S proteasome regulatory subunit p27 (nas2).